The following is a 345-amino-acid chain: Fructose-1,6-bisphosphatase class 1 1 (345 aa).

Mg(2+)-binding residues include glutamate 90, aspartate 109, leucine 111, and aspartate 112. Substrate contacts are provided by residues aspartate 112 to serine 115 and asparagine 200. Glutamate 272 provides a ligand contact to Mg(2+).

The protein belongs to the FBPase class 1 family. Homotetramer. It depends on Mg(2+) as a cofactor.

The protein localises to the cytoplasm. It carries out the reaction beta-D-fructose 1,6-bisphosphate + H2O = beta-D-fructose 6-phosphate + phosphate. Its pathway is carbohydrate biosynthesis; gluconeogenesis. In Nitrobacter hamburgensis (strain DSM 10229 / NCIMB 13809 / X14), this protein is Fructose-1,6-bisphosphatase class 1 1.